The sequence spans 446 residues: Argininosuccinate synthase (446 aa).

ATP-binding positions include 17 to 25 (AFSGGLDTS) and alanine 43. L-citrulline is bound at residue tyrosine 99. Residues glycine 129 and threonine 131 each coordinate ATP. Residues threonine 131, asparagine 135, and aspartate 136 each contribute to the L-aspartate site. Asparagine 135 is a binding site for L-citrulline. Aspartate 136 serves as a coordination point for ATP. Positions 139 and 192 each coordinate L-citrulline. Aspartate 194 is a binding site for ATP. Threonine 201, glutamate 203, and glutamate 280 together coordinate L-citrulline.

Belongs to the argininosuccinate synthase family. Type 2 subfamily. As to quaternary structure, homotetramer.

The protein localises to the cytoplasm. The catalysed reaction is L-citrulline + L-aspartate + ATP = 2-(N(omega)-L-arginino)succinate + AMP + diphosphate + H(+). Its pathway is amino-acid biosynthesis; L-arginine biosynthesis; L-arginine from L-ornithine and carbamoyl phosphate: step 2/3. This is Argininosuccinate synthase from Polaromonas sp. (strain JS666 / ATCC BAA-500).